Reading from the N-terminus, the 414-residue chain is 2,3-diketo-5-methylthiopentyl-1-phosphate enolase (414 aa).

Catalysis depends on lysine 99, which acts as the Proton acceptor. Residues lysine 148, 174–177, histidine 265, glycine 338, and 360–361 each bind substrate; these read KDDE and GG. Mg(2+) contacts are provided by lysine 174, aspartate 176, and glutamate 177. The residue at position 174 (lysine 174) is an N6-carboxylysine.

Belongs to the RuBisCO large chain family. Type IV subfamily. Homodimer. Mg(2+) serves as cofactor.

The enzyme catalyses 5-methylsulfanyl-2,3-dioxopentyl phosphate = 2-hydroxy-5-methylsulfanyl-3-oxopent-1-enyl phosphate. The protein operates within amino-acid biosynthesis; L-methionine biosynthesis via salvage pathway; L-methionine from S-methyl-5-thio-alpha-D-ribose 1-phosphate: step 3/6. In terms of biological role, catalyzes the enolization of 2,3-diketo-5-methylthiopentyl-1-phosphate (DK-MTP-1-P) into 2-hydroxy-3-keto-5-methylthiopentenyl-1-phosphate (HK-MTPenyl-1-P). In Bacillus mycoides (strain KBAB4) (Bacillus weihenstephanensis), this protein is 2,3-diketo-5-methylthiopentyl-1-phosphate enolase.